We begin with the raw amino-acid sequence, 121 residues long: Spermidine export protein MdtJ (121 aa).

The next 4 membrane-spanning stretches (helical) occupy residues 1 to 21 (MYIYWILLGLAIATEITGTLS), 32 to 52 (GGFILMLVMISLSYIFLSFAV), 55 to 75 (IALGVAYALWEGIGILFITLF), and 82 to 102 (ESLSLMKIAGLTTLVAGIVLI).

The protein belongs to the drug/metabolite transporter (DMT) superfamily. Small multidrug resistance (SMR) (TC 2.A.7.1) family. MdtJ subfamily. As to quaternary structure, forms a complex with MdtI.

It localises to the cell inner membrane. In terms of biological role, catalyzes the excretion of spermidine. The protein is Spermidine export protein MdtJ of Escherichia coli O127:H6 (strain E2348/69 / EPEC).